Here is a 437-residue protein sequence, read N- to C-terminus: tRNA-2-methylthio-N(6)-dimethylallyladenosine synthase (437 aa).

The region spanning 3–120 (RKLFIETHGC…LPEMIDAART (118 aa)) is the MTTase N-terminal domain. 6 residues coordinate [4Fe-4S] cluster: Cys12, Cys49, Cys83, Cys157, Cys161, and Cys164. Positions 143–370 (RVDGPSAYVS…QQRINQQGFE (228 aa)) constitute a Radical SAM core domain. The TRAM domain occupies 373–437 (RRMVGTTQRI…PHSLRGSLLS (65 aa)).

This sequence belongs to the methylthiotransferase family. MiaB subfamily. Monomer. Requires [4Fe-4S] cluster as cofactor.

It is found in the cytoplasm. It catalyses the reaction N(6)-dimethylallyladenosine(37) in tRNA + (sulfur carrier)-SH + AH2 + 2 S-adenosyl-L-methionine = 2-methylsulfanyl-N(6)-dimethylallyladenosine(37) in tRNA + (sulfur carrier)-H + 5'-deoxyadenosine + L-methionine + A + S-adenosyl-L-homocysteine + 2 H(+). In terms of biological role, catalyzes the methylthiolation of N6-(dimethylallyl)adenosine (i(6)A), leading to the formation of 2-methylthio-N6-(dimethylallyl)adenosine (ms(2)i(6)A) at position 37 in tRNAs that read codons beginning with uridine. The polypeptide is tRNA-2-methylthio-N(6)-dimethylallyladenosine synthase (Stutzerimonas stutzeri (strain A1501) (Pseudomonas stutzeri)).